A 299-amino-acid chain; its full sequence is Acetylglutamate kinase (299 aa).

Substrate is bound by residues 72 to 73 (GG), arginine 94, and asparagine 196.

This sequence belongs to the acetylglutamate kinase family. ArgB subfamily.

The protein localises to the cytoplasm. The enzyme catalyses N-acetyl-L-glutamate + ATP = N-acetyl-L-glutamyl 5-phosphate + ADP. Its pathway is amino-acid biosynthesis; L-arginine biosynthesis; N(2)-acetyl-L-ornithine from L-glutamate: step 2/4. Its function is as follows. Catalyzes the ATP-dependent phosphorylation of N-acetyl-L-glutamate. The polypeptide is Acetylglutamate kinase (Burkholderia mallei (strain NCTC 10247)).